The primary structure comprises 117 residues: Large ribosomal subunit protein uL18 (117 aa).

This sequence belongs to the universal ribosomal protein uL18 family. Part of the 50S ribosomal subunit; part of the 5S rRNA/L5/L18/L25 subcomplex. Contacts the 5S and 23S rRNAs.

In terms of biological role, this is one of the proteins that bind and probably mediate the attachment of the 5S RNA into the large ribosomal subunit, where it forms part of the central protuberance. This is Large ribosomal subunit protein uL18 from Blochmanniella pennsylvanica (strain BPEN).